The chain runs to 135 residues: Large ribosomal subunit protein eL27x (135 aa).

Belongs to the eukaryotic ribosomal protein eL27 family.

The sequence is that of Large ribosomal subunit protein eL27x (RPL27C) from Arabidopsis thaliana (Mouse-ear cress).